The sequence spans 434 residues: Enolase A (434 aa).

Substrate contacts are provided by His-160 and Glu-169. The active-site Proton donor is the Glu-212. 3 residues coordinate Mg(2+): Asp-247, Glu-296, and Asp-321. Substrate is bound by residues Glu-296 and Asp-321. Residue Lys-346 is the Proton acceptor of the active site. Substrate contacts are provided by residues 373–376 and Lys-397; that span reads SHRS.

The protein belongs to the enolase family. In terms of assembly, homodimer. Requires Mg(2+) as cofactor.

The protein localises to the cytoplasm. It carries out the reaction (2R)-2-phosphoglycerate = phosphoenolpyruvate + H2O. It functions in the pathway carbohydrate degradation; glycolysis; pyruvate from D-glyceraldehyde 3-phosphate: step 4/5. This chain is Enolase A (enoA), found in Dictyostelium discoideum (Social amoeba).